Here is a 320-residue protein sequence, read N- to C-terminus: tRNA N6-adenosine threonylcarbamoyltransferase (320 aa).

Residues H114 and H118 each coordinate Fe cation. Residues 136 to 140 (VVSGG), D169, G182, D186, and N273 contribute to the substrate site. Fe cation is bound at residue D297.

Belongs to the KAE1 / TsaD family. Fe(2+) serves as cofactor.

The protein localises to the cytoplasm. It carries out the reaction L-threonylcarbamoyladenylate + adenosine(37) in tRNA = N(6)-L-threonylcarbamoyladenosine(37) in tRNA + AMP + H(+). In terms of biological role, required for the formation of a threonylcarbamoyl group on adenosine at position 37 (t(6)A37) in tRNAs that read codons beginning with adenine. Is involved in the transfer of the threonylcarbamoyl moiety of threonylcarbamoyl-AMP (TC-AMP) to the N6 group of A37, together with TsaE and TsaB. TsaD likely plays a direct catalytic role in this reaction. The chain is tRNA N6-adenosine threonylcarbamoyltransferase from Ureaplasma urealyticum serovar 10 (strain ATCC 33699 / Western).